Reading from the N-terminus, the 255-residue chain is Large ribosomal subunit protein uL4 (255 aa).

It belongs to the universal ribosomal protein uL4 family. In terms of assembly, part of the 50S ribosomal subunit.

Functionally, one of the primary rRNA binding proteins, this protein initially binds near the 5'-end of the 23S rRNA. It is important during the early stages of 50S assembly. It makes multiple contacts with different domains of the 23S rRNA in the assembled 50S subunit and ribosome. Forms part of the polypeptide exit tunnel. The chain is Large ribosomal subunit protein uL4 from Thermoplasma volcanium (strain ATCC 51530 / DSM 4299 / JCM 9571 / NBRC 15438 / GSS1).